The primary structure comprises 190 residues: CASP-like protein 5A3 (190 aa).

Composition is skewed to low complexity over residues Met-1–Glu-12 and Ala-20–Gly-31. Positions Met-1–Gly-31 are disordered. Residues Met-1–Pro-50 lie on the Cytoplasmic side of the membrane. A helical membrane pass occupies residues Ala-51–Ala-71. Topologically, residues Ser-72 to Ala-81 are extracellular. Residues Phe-82–Val-102 form a helical membrane-spanning segment. Residues Asp-103–Asp-126 are Cytoplasmic-facing. The helical transmembrane segment at Gly-127–Ile-147 threads the bilayer. Topologically, residues Gly-148 to Thr-164 are extracellular. Residues Ala-165 to Trp-185 traverse the membrane as a helical segment. Topologically, residues Ser-186–Arg-190 are cytoplasmic.

Belongs to the Casparian strip membrane proteins (CASP) family. Homodimer and heterodimers.

Its subcellular location is the cell membrane. This is CASP-like protein 5A3 from Zea mays (Maize).